A 456-amino-acid polypeptide reads, in one-letter code: UPF0496 protein 4 (456 aa).

A helical membrane pass occupies residues 195–217 (VLMRALYGIESVTVFVCSIFVAV). Positions 368 to 390 (QDSNVKQANGSSDESALVVPERT) are disordered. A compositionally biased stretch (polar residues) spans 371–381 (NVKQANGSSDE).

Belongs to the ROH1 family.

It localises to the membrane. This chain is UPF0496 protein 4, found in Oryza sativa subsp. japonica (Rice).